Consider the following 63-residue polypeptide: Cecropin-1 (63 aa).

An N-terminal signal peptide occupies residues 1–21; it reads MNFNKVFILVAIVIAIFAGQT. Positions 22–23 are excised as a propeptide; sequence EA. Arginine 62 carries the arginine amide modification.

The protein belongs to the cecropin family.

The protein localises to the secreted. Functionally, cecropins have lytic and antibacterial activity against several Gram-positive and Gram-negative bacteria. This Ceratitis capitata (Mediterranean fruit fly) protein is Cecropin-1 (CEC1).